The primary structure comprises 616 residues: Pyrophosphate--fructose 6-phosphate 1-phosphotransferase subunit alpha (616 aa).

It belongs to the phosphofructokinase type A (PFKA) family. PPi-dependent PFK group II subfamily. Clade 'Long' sub-subfamily. In terms of assembly, tetramer of two alpha (regulatory) and two beta (catalytic) chains.

The protein localises to the cytoplasm. The protein operates within carbohydrate degradation; glycolysis; D-glyceraldehyde 3-phosphate and glycerone phosphate from D-glucose: step 3/4. Allosterically activated by fructose 2,6-bisphosphate. Functionally, regulatory subunit of pyrophosphate--fructose 6-phosphate 1-phosphotransferase. In Solanum tuberosum (Potato), this protein is Pyrophosphate--fructose 6-phosphate 1-phosphotransferase subunit alpha.